The chain runs to 248 residues: Probable transcriptional regulatory protein HCH_04926 (248 aa).

The protein belongs to the TACO1 family.

It is found in the cytoplasm. The protein is Probable transcriptional regulatory protein HCH_04926 of Hahella chejuensis (strain KCTC 2396).